We begin with the raw amino-acid sequence, 589 residues long: ATP-dependent lipid A-core flippase (589 aa).

5 consecutive transmembrane segments (helical) span residues 29–49, 68–88, 157–177, 254–274, and 283–303; these read WLLV…STFL, ALWL…AGYI, VIGA…AILL, ISSA…LLIA, and LSPG…PALK. In terms of domain architecture, ABC transmembrane type-1 spans 32–314; the sequence is VVAACGALLE…LTNVQNMLQS (283 aa). The ABC transporter domain maps to 346-582; that stretch reads IEFRGITARY…DGLYAYLYSM (237 aa). Position 380–387 (380–387) interacts with ATP; sequence GRSGSGKS.

It belongs to the ABC transporter superfamily. Lipid exporter (TC 3.A.1.106) family. Homodimer.

Its subcellular location is the cell inner membrane. It carries out the reaction ATP + H2O + lipid A-core oligosaccharideSide 1 = ADP + phosphate + lipid A-core oligosaccharideSide 2.. In terms of biological role, involved in lipopolysaccharide (LPS) biosynthesis. Translocates lipid A-core from the inner to the outer leaflet of the inner membrane. Transmembrane domains (TMD) form a pore in the inner membrane and the ATP-binding domain (NBD) is responsible for energy generation. The sequence is that of ATP-dependent lipid A-core flippase from Xylella fastidiosa (strain Temecula1 / ATCC 700964).